Consider the following 311-residue polypeptide: Cell division protein FtsQ (311 aa).

A disordered region spans residues methionine 1–proline 28. Residues methionine 1 to lysine 46 are Cytoplasmic-facing. The helical transmembrane segment at alanine 47 to aspartate 67 threads the bilayer. The Periplasmic portion of the chain corresponds to glutamate 68 to glycine 311. A POTRA domain is found at phenylalanine 91–arginine 159.

This sequence belongs to the FtsQ/DivIB family. FtsQ subfamily.

The protein localises to the cell inner membrane. Functionally, essential cell division protein. This chain is Cell division protein FtsQ, found in Jannaschia sp. (strain CCS1).